Here is a 298-residue protein sequence, read N- to C-terminus: Junctional adhesion molecule B (298 aa).

The N-terminal stretch at 1–28 (MARRSRHRLLLLLLRYLVVALGYHKAYG) is a signal peptide. Residues 29–238 (FSAPKDQQVV…RMQVDDLNIS (210 aa)) are Extracellular-facing. Residues 32–127 (PKDQQVVTAV…GQNLEEDTVT (96 aa)) enclose the Ig-like V-type domain. Disulfide bonds link cysteine 50/cysteine 109 and cysteine 155/cysteine 214. N-linked (GlcNAc...) asparagine glycosylation is found at asparagine 98, asparagine 187, and asparagine 236. The Ig-like C2-type domain occupies 134 to 238 (PAVPSCEVPS…RMQVDDLNIS (105 aa)). A helical transmembrane segment spans residues 239–259 (GIIAAVVVVALVISVCGLGVC). The Cytoplasmic segment spans residues 260-298 (YAQRKGYFSKETSFQKSNSSSKATTMSENDFKHTKSFII).

The protein belongs to the immunoglobulin superfamily. Highly expressed in heart, placenta, lung, foreskin and lymph node. Prominently expressed on high endothelial venules and also present on the endothelia of other vessels (at protein level). Also expressed in the brain in the caudate nuclei.

The protein localises to the cell membrane. Its subcellular location is the cell junction. It localises to the tight junction. In terms of biological role, junctional adhesion protein that mediates heterotypic cell-cell interactions with its cognate receptor JAM3 to regulate different cellular processes. Plays a role in homing and mobilization of hematopoietic stem and progenitor cells within the bone marrow. At the surface of bone marrow stromal cells, it contributes to the retention of the hematopoietic stem and progenitor cells expressing JAM3. Plays a central role in leukocytes extravasation by facilitating not only transmigration but also tethering and rolling of leukocytes along the endothelium. Tethering and rolling of leukocytes are dependent on the binding by JAM2 of the integrin alpha-4/beta-1. Plays a role in spermatogenesis where JAM2 and JAM3, which are respectively expressed by Sertoli and germ cells, mediate an interaction between both cell types and play an essential role in the anchorage of germ cells onto Sertoli cells and the assembly of cell polarity complexes during spermatid differentiation. Also functions as an inhibitory somatodendritic cue that prevents the myelination of non-axonal parts of neurons. During myogenesis, it is involved in myocyte fusion. May also play a role in angiogenesis. The sequence is that of Junctional adhesion molecule B from Homo sapiens (Human).